Here is a 126-residue protein sequence, read N- to C-terminus: Large ribosomal subunit protein bL12 (126 aa).

It belongs to the bacterial ribosomal protein bL12 family. Homodimer. Part of the ribosomal stalk of the 50S ribosomal subunit. Forms a multimeric L10(L12)X complex, where L10 forms an elongated spine to which 2 to 4 L12 dimers bind in a sequential fashion. Binds GTP-bound translation factors.

Its function is as follows. Forms part of the ribosomal stalk which helps the ribosome interact with GTP-bound translation factors. Is thus essential for accurate translation. This chain is Large ribosomal subunit protein bL12, found in Bifidobacterium longum (strain DJO10A).